We begin with the raw amino-acid sequence, 554 residues long: Probable ATP-binding cassette sub-family F member 3 homolog (554 aa).

ABC transporter domains are found at residues 89-285 (GDLH…ASAR) and 351-554 (IEFV…GLGV). Residues 122 to 129 (GRNGIGKT) and 383 to 390 (GANGQGKS) each bind ATP.

Belongs to the ABC transporter superfamily. ABCF family. EF3 subfamily.

This chain is Probable ATP-binding cassette sub-family F member 3 homolog, found in Encephalitozoon cuniculi (strain GB-M1) (Microsporidian parasite).